Reading from the N-terminus, the 144-residue chain is Putative 2'-deoxynucleoside 5'-phosphate N-hydrolase 1 (144 aa).

Substrate is bound by residues 7 to 13 (YFCGSIR), Tyr-22, His-39, Glu-83, and 107 to 109 (SGM).

The protein belongs to the 2'-deoxynucleoside 5'-phosphate N-hydrolase 1 family. In terms of assembly, monomer and homodimer.

Its subcellular location is the cytoplasm. The protein resides in the nucleus. The catalysed reaction is a pyrimidine 2'-deoxyribonucleoside 5'-phosphate + H2O = a pyrimidine nucleobase + 2-deoxy-D-ribose 5-phosphate. The enzyme catalyses a purine 2'-deoxyribonucleoside 5'-phosphate + H2O = a purine nucleobase + 2-deoxy-D-ribose 5-phosphate. Functionally, catalyzes the cleavage of the N-glycosidic bond of deoxyribonucleoside 5'-monophosphates to yield deoxyribose 5-phosphate and a purine or pyrimidine base. The chain is Putative 2'-deoxynucleoside 5'-phosphate N-hydrolase 1 from Trichoplax adhaerens (Trichoplax reptans).